The sequence spans 70 residues: UPF0352 protein Sfri_2492 (70 aa).

The protein belongs to the UPF0352 family.

This is UPF0352 protein Sfri_2492 from Shewanella frigidimarina (strain NCIMB 400).